Consider the following 107-residue polypeptide: Large ribosomal subunit protein P2 (107 aa).

The span at 63–83 (SSVPSGGSAPAAAAPSGGAAP) shows a compositional bias: low complexity. Residues 63 to 107 (SSVPSGGSAPAAAAPSGGAAPKAEEKKKEEPKEESDDDMGFGLFD) are disordered. Positions 84-93 (KAEEKKKEEP) are enriched in basic and acidic residues.

Belongs to the eukaryotic ribosomal protein P1/P2 family. P1 and P2 exist as dimers at the large ribosomal subunit. In terms of processing, phosphorylated.

Plays an important role in the elongation step of protein synthesis. This is Large ribosomal subunit protein P2 from Caenorhabditis elegans.